A 172-amino-acid polypeptide reads, in one-letter code: Gastrula zinc finger protein XlCGF51.1A (172 aa).

C2H2-type zinc fingers lie at residues 6–28 (FSCSDCGARFTYRSLLRRHNKIH), 34–56 (LICSECGKPFTSESALTAHQRSH), 62–84 (FSCTDCEKCFAQRMHLIEHQRTH), 90–112 (FSCTVCGEMFTYRAQFSKHMLKH), 122–144 (LDCSHCGKHFTSRSDLTVHRKSH), and 150–172 (LQCSDCGKCFKYQSQLASHQRVH).

This sequence belongs to the krueppel C2H2-type zinc-finger protein family.

The protein resides in the nucleus. May be involved in transcriptional regulation. The chain is Gastrula zinc finger protein XlCGF51.1A from Xenopus laevis (African clawed frog).